The primary structure comprises 309 residues: MAPKVSDSVEQLRAAGNQNFRNGQYGEASALYERALRLLQARGSADPEEESVLYSNRAACYLKDGNCTDCIKDCTSALALVPFSIKPLLRRASAYEALEKYSLAYVDYKTVLQIDNSVASALEGINRITRALMDSLGPEWRLKLPPIPVVPVSAQKRWSSLPSENHKETAKSKSKETTATKNRVPSAGDVERARVLKEEGNELVKKGNHKKAIEKYSESLLFSSLESATYSNRALCHLVLKQYKEAEKDCTEALKLDGKNVKAFYRRAQAYKALKDYKSSLADISSLLQIEPRNGPAHKLRQEVNQNMN.

Position 8 is a phosphoserine (Ser8). TPR repeat units follow at residues 9–42 (VEQL…LQAR), 51–84 (SVLY…VPFS), and 86–118 (KPLL…DNSV). Residues 158-187 (WSSLPSENHKETAKSKSKETTATKNRVPSA) are disordered. Ser160 carries the post-translational modification Phosphoserine. Basic and acidic residues predominate over residues 164–178 (ENHKETAKSKSKETT). Ser186 bears the Phosphoserine mark. 3 TPR repeats span residues 193–226 (ARVL…SSLE), 227–260 (SATY…DGKN), and 262–294 (KAFY…EPRN). A Glycyl lysine isopeptide (Lys-Gly) (interchain with G-Cter in SUMO2) cross-link involves residue Lys197.

This sequence belongs to the Tom34 family. As to quaternary structure, interacts with HSP90A, VCP, ATP6V1D, KIAA0665, AMPK, and DMAP1 through its TPR repeat.

It is found in the cytoplasm. The protein resides in the mitochondrion outer membrane. Its function is as follows. Plays a role in the import of cytosolically synthesized preproteins into mitochondria. Binds the mature portion of precursor proteins. Interacts with cellular components, and possesses weak ATPase activity. May be a chaperone-like protein that helps to keep newly synthesized precursors in an unfolded import compatible state. The protein is Mitochondrial import receptor subunit TOM34 (Tomm34) of Rattus norvegicus (Rat).